A 181-amino-acid polypeptide reads, in one-letter code: Peptide methionine sulfoxide reductase MsrA (181 aa).

Residue C14 is part of the active site.

This sequence belongs to the MsrA Met sulfoxide reductase family.

The catalysed reaction is L-methionyl-[protein] + [thioredoxin]-disulfide + H2O = L-methionyl-(S)-S-oxide-[protein] + [thioredoxin]-dithiol. It carries out the reaction [thioredoxin]-disulfide + L-methionine + H2O = L-methionine (S)-S-oxide + [thioredoxin]-dithiol. Has an important function as a repair enzyme for proteins that have been inactivated by oxidation. Catalyzes the reversible oxidation-reduction of methionine sulfoxide in proteins to methionine. This is Peptide methionine sulfoxide reductase MsrA from Bacillus licheniformis (strain ATCC 14580 / DSM 13 / JCM 2505 / CCUG 7422 / NBRC 12200 / NCIMB 9375 / NCTC 10341 / NRRL NRS-1264 / Gibson 46).